The chain runs to 110 residues: METIAKHRHARSSAQKVRLVADLIRGKKVSQALETLTYTNKKAAGLVKKVLESAIANAEHNDGADIDDLKVTKIFVDEGPSMKRIMPRAKGRADRILKRTSHITVVVSDR.

It belongs to the universal ribosomal protein uL22 family. As to quaternary structure, part of the 50S ribosomal subunit.

Its function is as follows. This protein binds specifically to 23S rRNA; its binding is stimulated by other ribosomal proteins, e.g. L4, L17, and L20. It is important during the early stages of 50S assembly. It makes multiple contacts with different domains of the 23S rRNA in the assembled 50S subunit and ribosome. In terms of biological role, the globular domain of the protein is located near the polypeptide exit tunnel on the outside of the subunit, while an extended beta-hairpin is found that lines the wall of the exit tunnel in the center of the 70S ribosome. The sequence is that of Large ribosomal subunit protein uL22 from Yersinia pseudotuberculosis serotype O:1b (strain IP 31758).